The following is a 321-amino-acid chain: ATP-dependent 6-phosphofructokinase (321 aa).

Glycine 12 is a binding site for ATP. ADP-binding positions include 22-26 and 55-60; these read RGVVR and RYSVSD. ATP contacts are provided by residues 73–74 and 103–106; these read RF and GDGS. Aspartate 104 lines the Mg(2+) pocket. 127 to 129 contacts substrate; that stretch reads TID. Catalysis depends on aspartate 129, which acts as the Proton acceptor. ADP is bound at residue arginine 156. Residues arginine 164 and 171–173 each bind substrate; that span reads MGR. Residues 187-189, arginine 213, and 215-217 contribute to the ADP site; these read GCE and KRH. Residues glutamate 224, arginine 245, and 251–254 contribute to the substrate site; that span reads HIQR.

This sequence belongs to the phosphofructokinase type A (PFKA) family. ATP-dependent PFK group I subfamily. Prokaryotic clade 'B1' sub-subfamily. Homotetramer. Mg(2+) is required as a cofactor.

It is found in the cytoplasm. It catalyses the reaction beta-D-fructose 6-phosphate + ATP = beta-D-fructose 1,6-bisphosphate + ADP + H(+). It participates in carbohydrate degradation; glycolysis; D-glyceraldehyde 3-phosphate and glycerone phosphate from D-glucose: step 3/4. Its activity is regulated as follows. Allosterically activated by ADP and other diphosphonucleosides, and allosterically inhibited by phosphoenolpyruvate. Its function is as follows. Catalyzes the phosphorylation of D-fructose 6-phosphate to fructose 1,6-bisphosphate by ATP, the first committing step of glycolysis. In Haemophilus influenzae (strain 86-028NP), this protein is ATP-dependent 6-phosphofructokinase.